Reading from the N-terminus, the 338-residue chain is MTKISALGAGSWGSVLASMLADNGHEVALYAHRQVIADEINQDHTNLHYMKDWTLNPSVWASTDMGQVLKDCDVILFAVPTSAIRSVAKAVRQVLDENGRQPYLVSATKGIESGTKKLVLQIFKDEIYPDGFDKMIVLSGPSHAENTAQKDLTAITLASTSLDNAAKMQKIFSNDYVRFYTSNDPIGVQVGGAVKNVIAIAAGILAGLGYGDNAKAALMTRGLAEITRLGVAFGGQPWTFSGLSGIGDLIVTCTSVNSRNWRCGYQLGQGKPLDEVLANMGQVVEGATTVKAVYEICDKYSLDMPISASIYKVLYEGAKIDDEIKLMMSRQLGPEIRI.

NADPH contacts are provided by S11, W12, H32, R33, and K109. Residues K109, G140, and S142 each contribute to the sn-glycerol 3-phosphate site. Residue A144 participates in NADPH binding. Positions 195, 248, 258, 259, and 260 each coordinate sn-glycerol 3-phosphate. K195 functions as the Proton acceptor in the catalytic mechanism. An NADPH-binding site is contributed by R259. V283 and E285 together coordinate NADPH.

This sequence belongs to the NAD-dependent glycerol-3-phosphate dehydrogenase family.

It is found in the cytoplasm. It catalyses the reaction sn-glycerol 3-phosphate + NAD(+) = dihydroxyacetone phosphate + NADH + H(+). The enzyme catalyses sn-glycerol 3-phosphate + NADP(+) = dihydroxyacetone phosphate + NADPH + H(+). It functions in the pathway membrane lipid metabolism; glycerophospholipid metabolism. In terms of biological role, catalyzes the reduction of the glycolytic intermediate dihydroxyacetone phosphate (DHAP) to sn-glycerol 3-phosphate (G3P), the key precursor for phospholipid synthesis. The polypeptide is Glycerol-3-phosphate dehydrogenase [NAD(P)+] 1 (Lactobacillus delbrueckii subsp. bulgaricus (strain ATCC 11842 / DSM 20081 / BCRC 10696 / JCM 1002 / NBRC 13953 / NCIMB 11778 / NCTC 12712 / WDCM 00102 / Lb 14)).